The chain runs to 842 residues: Alanine--tRNA ligase (842 aa).

Zn(2+)-binding residues include His549, His553, Cys650, and His654.

The protein belongs to the class-II aminoacyl-tRNA synthetase family. The cofactor is Zn(2+).

The protein resides in the cytoplasm. It carries out the reaction tRNA(Ala) + L-alanine + ATP = L-alanyl-tRNA(Ala) + AMP + diphosphate. Catalyzes the attachment of alanine to tRNA(Ala) in a two-step reaction: alanine is first activated by ATP to form Ala-AMP and then transferred to the acceptor end of tRNA(Ala). Also edits incorrectly charged Ser-tRNA(Ala) and Gly-tRNA(Ala) via its editing domain. The sequence is that of Alanine--tRNA ligase from Campylobacter jejuni subsp. doylei (strain ATCC BAA-1458 / RM4099 / 269.97).